Reading from the N-terminus, the 827-residue chain is Striatin homolog (827 aa).

A coiled-coil region spans residues 37–109 (RAHWISEKAE…VEEEEEEDDK (73 aa)). Disordered regions lie at residues 99–123 (KVEE…SKDN), 181–270 (KDIN…QLQS), 311–362 (SSVS…DEQS), and 400–459 (EEGN…SELM). Residues 109–123 (KIPKNREPPKKSKDN) are compositionally biased toward basic and acidic residues. Composition is skewed to low complexity over residues 184-270 (NNNN…QLQS) and 311-334 (SSVS…TSKQ). The segment covering 337–346 (EDPNNVTISK) has biased composition (polar residues). Composition is skewed to low complexity over residues 347-356 (QQQQEQQQQQ), 416-432 (TPTT…STGS), and 439-453 (SSSS…NSNT). 6 WD repeats span residues 495–534 (SHFD…PTKK), 548–593 (GHTG…IDSY), 610–649 (GHQD…QLYT), 709–748 (NNNS…VVHS), 751–790 (AHSN…CIQD), and 797–827 (KYDE…RILN).

The protein belongs to the WD repeat striatin family. As to quaternary structure, part of the core of STRIPAK complexes.

The protein localises to the cytoplasm. Its subcellular location is the membrane. Its function is as follows. Calmodulin-binding scaffolding protein which is the center of the striatin-interacting phosphatase and kinase (STRIPAK) complexes. STRIPAK complexes have critical roles in protein (de)phosphorylation and are regulators of multiple signaling pathways including Hippo, MAPK, nuclear receptor and cytoskeleton remodeling. Different types of STRIPAK complexes are involved in a variety of biological processes such as cell growth, differentiation, apoptosis, metabolism and immune regulation. This Dictyostelium discoideum (Social amoeba) protein is Striatin homolog (strn).